The following is a 105-amino-acid chain: Phosphoribosyl-ATP pyrophosphatase (105 aa).

It belongs to the PRA-PH family.

The protein resides in the cytoplasm. It carries out the reaction 1-(5-phospho-beta-D-ribosyl)-ATP + H2O = 1-(5-phospho-beta-D-ribosyl)-5'-AMP + diphosphate + H(+). It functions in the pathway amino-acid biosynthesis; L-histidine biosynthesis; L-histidine from 5-phospho-alpha-D-ribose 1-diphosphate: step 2/9. This Ruthia magnifica subsp. Calyptogena magnifica protein is Phosphoribosyl-ATP pyrophosphatase.